The chain runs to 174 residues: Ribosome maturation factor RimM (174 aa).

The PRC barrel domain maps to 98-171 (EDEFYFHEII…KIKIHVMEGL (74 aa)).

It belongs to the RimM family. Binds ribosomal protein uS19.

Its subcellular location is the cytoplasm. An accessory protein needed during the final step in the assembly of 30S ribosomal subunit, possibly for assembly of the head region. Essential for efficient processing of 16S rRNA. May be needed both before and after RbfA during the maturation of 16S rRNA. It has affinity for free ribosomal 30S subunits but not for 70S ribosomes. In Bacillus velezensis (strain DSM 23117 / BGSC 10A6 / LMG 26770 / FZB42) (Bacillus amyloliquefaciens subsp. plantarum), this protein is Ribosome maturation factor RimM.